The primary structure comprises 384 residues: Isoafricanol synthase (384 aa).

Mg(2+) contacts are provided by aspartate 95, asparagine 245, serine 249, and glutamate 253.

This sequence belongs to the terpene synthase family. The cofactor is Mg(2+).

The enzyme catalyses (2E,6E)-farnesyl diphosphate + H2O = (+)-isoafricanol + diphosphate. Its function is as follows. Catalyzes the cyclization of farnesyl diphosphate (FPP) to isoafricanol. In Streptomyces violaceusniger (strain Tu 4113), this protein is Isoafricanol synthase.